The chain runs to 445 residues: Lipoyl synthase, mitochondrial (445 aa).

Residues methionine 1–tyrosine 40 constitute a mitochondrion transit peptide. Residues threonine 42–threonine 71 show a composition bias toward low complexity. Positions threonine 42–tyrosine 77 are disordered. [4Fe-4S] cluster-binding residues include cysteine 157, cysteine 162, cysteine 168, cysteine 188, cysteine 192, cysteine 195, and serine 405. One can recognise a Radical SAM core domain in the interval glycine 171–leucine 394.

This sequence belongs to the radical SAM superfamily. Lipoyl synthase family. It depends on [4Fe-4S] cluster as a cofactor.

Its subcellular location is the mitochondrion. The catalysed reaction is [[Fe-S] cluster scaffold protein carrying a second [4Fe-4S](2+) cluster] + N(6)-octanoyl-L-lysyl-[protein] + 2 oxidized [2Fe-2S]-[ferredoxin] + 2 S-adenosyl-L-methionine + 4 H(+) = [[Fe-S] cluster scaffold protein] + N(6)-[(R)-dihydrolipoyl]-L-lysyl-[protein] + 4 Fe(3+) + 2 hydrogen sulfide + 2 5'-deoxyadenosine + 2 L-methionine + 2 reduced [2Fe-2S]-[ferredoxin]. The protein operates within protein modification; protein lipoylation via endogenous pathway; protein N(6)-(lipoyl)lysine from octanoyl-[acyl-carrier-protein]: step 2/2. Its function is as follows. Catalyzes the radical-mediated insertion of two sulfur atoms into the C-6 and C-8 positions of the octanoyl moiety bound to the lipoyl domains of lipoate-dependent enzymes, thereby converting the octanoylated domains into lipoylated derivatives. This is Lipoyl synthase, mitochondrial from Sordaria macrospora (strain ATCC MYA-333 / DSM 997 / K(L3346) / K-hell).